Reading from the N-terminus, the 581-residue chain is Neither inactivation nor afterpotential protein G (581 aa).

The N-terminal stretch at 1–26 is a signal peptide; the sequence is MGMKFQKILVLAGIVIGFLSIIVVLA. Residue 48–77 coordinates FAD; that stretch reads DYVIVGGGTGGSTLTSLLAKNSNGSVLLIE. N70, N156, N404, and N464 each carry an N-linked (GlcNAc...) asparagine glycan. H516 (proton acceptor) is an active-site residue.

The protein belongs to the GMC oxidoreductase family. FAD serves as cofactor.

The protein resides in the secreted. Functionally, oxidoreductase involved in biosynthesis of 3-hydroxyretinal, a chromophore for rhodopsin Rh1. Not responsible for the initial hydroxylation of the retinal ring but rather acts in a subsequent step in chromophore production. May catalyze the conversion of (3R)-3-hydroxyretinol to the 3S enantiomer. This is Neither inactivation nor afterpotential protein G (ninaG) from Drosophila melanogaster (Fruit fly).